The primary structure comprises 297 residues: Counting factor 45-1 (297 aa).

The first 20 residues, 1 to 20, serve as a signal peptide directing secretion; the sequence is MNKLISLLLVCLVAIALVNA. Residues 24-235 form the Ch-type lysozyme domain; it reads IDFDSDTVNS…SASTGSGSGS (212 aa). Catalysis depends on residues D29, D119, and E121. An N-linked (GlcNAc...) asparagine glycan is attached at N166. The S-G-S motif repeats stretch occupies residues 231–296; the sequence is SGSGSSSGSS…GSSSGSGSGS (66 aa). A disordered region spans residues 231–297; sequence SGSGSSSGSS…SSSGSGSGSS (67 aa). The span at 234–275 shows a compositional bias: low complexity; that stretch reads GSSSGSSSGSSSGSSSGSGSSSGSGSSSGSSSGSGSGSSSSG. The segment covering 276-297 has biased composition (gly residues); it reads SGSGSGSSSGSGSSSGSGSGSS.

It belongs to the glycosyl hydrolase 25 family. Monomer. Component of the counting factor (CF) complex, which includes cf60, cf50, cf45-1 and ctnA.

Its subcellular location is the secreted. Its function is as follows. Cell-counting factor that limits the maximum size of the multicellular structure during aggregation. The polypeptide is Counting factor 45-1 (cf45-1) (Dictyostelium discoideum (Social amoeba)).